We begin with the raw amino-acid sequence, 193 residues long: Glycerol-3-phosphate acyltransferase (193 aa).

A run of 4 helical transmembrane segments spans residues 2 to 22, 76 to 96, 112 to 132, and 152 to 172; these read LIAL…GLIV, VPIH…FPVF, LLFY…VFLF, and CLFV…AFVI.

This sequence belongs to the PlsY family. As to quaternary structure, probably interacts with PlsX.

It localises to the cell membrane. It catalyses the reaction an acyl phosphate + sn-glycerol 3-phosphate = a 1-acyl-sn-glycero-3-phosphate + phosphate. Its pathway is lipid metabolism; phospholipid metabolism. Its function is as follows. Catalyzes the transfer of an acyl group from acyl-phosphate (acyl-PO(4)) to glycerol-3-phosphate (G3P) to form lysophosphatidic acid (LPA). This enzyme utilizes acyl-phosphate as fatty acyl donor, but not acyl-CoA or acyl-ACP. The polypeptide is Glycerol-3-phosphate acyltransferase (Bacillus velezensis (strain DSM 23117 / BGSC 10A6 / LMG 26770 / FZB42) (Bacillus amyloliquefaciens subsp. plantarum)).